The sequence spans 331 residues: Phosphate acyltransferase (331 aa).

The protein belongs to the PlsX family. In terms of assembly, homodimer. Probably interacts with PlsY.

It localises to the cytoplasm. It catalyses the reaction a fatty acyl-[ACP] + phosphate = an acyl phosphate + holo-[ACP]. It functions in the pathway lipid metabolism; phospholipid metabolism. Functionally, catalyzes the reversible formation of acyl-phosphate (acyl-PO(4)) from acyl-[acyl-carrier-protein] (acyl-ACP). This enzyme utilizes acyl-ACP as fatty acyl donor, but not acyl-CoA. The sequence is that of Phosphate acyltransferase from Ureaplasma urealyticum serovar 10 (strain ATCC 33699 / Western).